The following is a 123-amino-acid chain: MNGSNMANTSPSVKSKEDQGLSGHDEKENPFAEYMWMENEEDFNRQVEEELQEQDFLDRCFQEMLDEEDQDWFIPSRDLPQAMGQLQQQLNGLSVSEGHDSEDILSKSNLNPDAKEFIPGEKY.

M1 is modified (N-acetylmethionine). Over residues 1 to 13 (MNGSNMANTSPSV) the composition is skewed to polar residues. 2 disordered regions span residues 1 to 30 (MNGSNMANTSPSVKSKEDQGLSGHDEKENP) and 91 to 123 (NGLSVSEGHDSEDILSKSNLNPDAKEFIPGEKY). 2 stretches are compositionally biased toward basic and acidic residues: residues 14 to 30 (KSKEDQGLSGHDEKENP) and 113 to 123 (DAKEFIPGEKY).

Belongs to the PAIP2 family. In terms of assembly, interacts (via central acidic portion and C-terminus) with PABPC1 (via the second and third RRM domains and the C-terminus). Post-translationally, ubiquitinated in vitro. Expressed in brain, cervix, heart, liver, ovary, kidney, prostate and testis.

In terms of biological role, inhibits translation of capped and polyadenylated mRNAs by displacing PABPC1 from the poly(A) tail. The chain is Polyadenylate-binding protein-interacting protein 2B (PAIP2B) from Homo sapiens (Human).